A 587-amino-acid chain; its full sequence is Inorganic phosphate transporter 2-1, chloroplastic (587 aa).

Residues 1-71 (MTLPYRFSSV…VCPLASFSSY (71 aa)) constitute a chloroplast transit peptide. Residues 74-106 (SEGEEQHHADQPIQNPHESSTVSNESDGKGNAE) form a disordered region. Residues 85 to 98 (PIQNPHESSTVSNE) are compositionally biased toward polar residues. 12 consecutive transmembrane segments (helical) span residues 127 to 147 (AISI…KSLG), 154 to 174 (TKLL…NIGA), 195 to 215 (AVMT…THVT), 233 to 253 (MLLF…LQVA), 265 to 285 (CIVG…AVFW), 289 to 309 (AKVA…SFLV), 327 to 347 (AAAA…SAAL), 352 to 372 (IFPI…IVFD), 413 to 433 (LEIV…FMSF), 465 to 485 (IVIP…GLTM), 523 to 543 (LGLP…VGFA), and 559 to 579 (ASWL…TWIF).

The protein belongs to the inorganic phosphate transporter (PiT) (TC 2.A.20.2) family. As to expression, mostly expressed in young green tissues. Present in both auto- and heterotrophic tissues. Also expressed in root stele.

It localises to the plastid. The protein localises to the chloroplast inner membrane. Functionally, low affinity H(+)/Pi chloroplastic cotransporter. Involved in inorganic phosphate (orthophosphate, Pi) uptake in green parts of plants in Pi-sufficient conditions. Required for Pi retranslocation during Pi deprivation. The sequence is that of Inorganic phosphate transporter 2-1, chloroplastic (PHT2-1) from Arabidopsis thaliana (Mouse-ear cress).